Reading from the N-terminus, the 632-residue chain is tRNA uridine 5-carboxymethylaminomethyl modification enzyme MnmG (632 aa).

FAD-binding positions include 13-18 (GGGHAG), Val125, and Ser180. 273-287 (GPRYCPSIEDKINRF) serves as a coordination point for NAD(+). Residue Gln370 coordinates FAD.

It belongs to the MnmG family. In terms of assembly, homodimer. Heterotetramer of two MnmE and two MnmG subunits. The cofactor is FAD.

The protein resides in the cytoplasm. Its function is as follows. NAD-binding protein involved in the addition of a carboxymethylaminomethyl (cmnm) group at the wobble position (U34) of certain tRNAs, forming tRNA-cmnm(5)s(2)U34. The chain is tRNA uridine 5-carboxymethylaminomethyl modification enzyme MnmG from Shewanella sediminis (strain HAW-EB3).